Here is a 248-residue protein sequence, read N- to C-terminus: Large ribosomal subunit protein uL4 (248 aa).

Disordered stretches follow at residues 48–95 (GTHK…GPVP) and 210–248 (AFSE…RTGA). Basic and acidic residues predominate over residues 233–248 (DATKARSSRHDDRTGA).

It belongs to the universal ribosomal protein uL4 family. Part of the 50S ribosomal subunit.

In terms of biological role, one of the primary rRNA binding proteins, this protein initially binds near the 5'-end of the 23S rRNA. It is important during the early stages of 50S assembly. It makes multiple contacts with different domains of the 23S rRNA in the assembled 50S subunit and ribosome. Functionally, forms part of the polypeptide exit tunnel. The polypeptide is Large ribosomal subunit protein uL4 (Tropheryma whipplei (strain TW08/27) (Whipple's bacillus)).